The sequence spans 340 residues: 4-dimethylallyltryptophan N-methyltransferase easF (340 aa).

This sequence belongs to the methyltransferase superfamily. In terms of assembly, homodimer.

The enzyme catalyses 4-(3-methylbut-2-enyl)-L-tryptophan + S-adenosyl-L-methionine = 4-(3-methylbut-2-enyl)-L-abrine + S-adenosyl-L-homocysteine + H(+). The protein operates within alkaloid biosynthesis; ergot alkaloid biosynthesis. Its function is as follows. 4-dimethylallyltryptophan N-methyltransferase; part of the gene cluster that mediates the biosynthesis of fungal ergot alkaloid. DmaW catalyzes the first step of ergot alkaloid biosynthesis by condensing dimethylallyl diphosphate (DMAP) and tryptophan to form 4-dimethylallyl-L-tryptophan. The second step is catalyzed by the methyltransferase easF that methylates 4-dimethylallyl-L-tryptophan in the presence of S-adenosyl-L-methionine, resulting in the formation of 4-dimethylallyl-L-abrine. The catalase easC and the FAD-dependent oxidoreductase easE then transform 4-dimethylallyl-L-abrine to chanoclavine-I which is further oxidized by easD in the presence of NAD(+), resulting in the formation of chanoclavine-I aldehyde. Chanoclavine-I aldehyde is the precursor of ergoamides and ergopeptines in Clavicipitaceae, and clavine-type alcaloids such as fumiclavine in Trichocomaceae. However, the metabolites downstream of chanoclavine-I aldehyde in Arthrodermataceae have not been identified yet. The chain is 4-dimethylallyltryptophan N-methyltransferase easF from Arthroderma benhamiae (strain ATCC MYA-4681 / CBS 112371) (Trichophyton mentagrophytes).